The following is a 149-amino-acid chain: uncharacterized protein (149 aa).

This is an uncharacterized protein from Acidithiobacillus ferridurans.